The following is a 561-amino-acid chain: Lipase maturation factor 1 (561 aa).

The disordered stretch occupies residues 1–32; sequence MAAPRESLRRRKAGAGDPEPEAPPGQGRDLKG. Residues 1–42 lie on the Cytoplasmic side of the membrane; the sequence is MAAPRESLRRRKAGAGDPEPEAPPGQGRDLKGRPARLRAGTF. Residues 43 to 65 form a helical membrane-spanning segment; it reads WLTRIVLLRALAFVYFVAFLVAF. Residues 66 to 120 are Lumenal-facing; it reads HQNKQLIGDRGLLPCRAYLQSVQRHFGGRVSWDALSYAPTILWLLDWSHMDANLD. Residues 121–144 form a helical membrane-spanning segment; that stretch reads ALALLGLGISSFILVSGCANMVLM. Residues 145 to 200 lie on the Cytoplasmic side of the membrane; sequence AALWVLYMSLVNVGQIWYSFGWESQLLETGFLGIFLCPLWTLSALPRGTPTSWVVM. The chain crosses the membrane as a helical span at residues 201–214; it reads WGFRWLIFRIMLGA. Residues 215-285 lie on the Lumenal side of the membrane; it reads GLIKIRGDRC…LGRRMCIVHG (71 aa). A helical transmembrane segment spans residues 286 to 314; that stretch reads ALQVLFQVVLIISGNLSFLNWLTIVPSLA. Residues 315-360 are Cytoplasmic-facing; the sequence is CFDDATLGGLFPSGPGRLKDQVLKIQEEETRGARAPRTRGSVARGT. Residues 361–382 form a helical membrane-spanning segment; it reads VNLALGILVAWLSIPVVLNLLS. The Lumenal portion of the chain corresponds to 383–561; that stretch reads PRQVMNSSFN…SRQWPYPEPE (179 aa).

This sequence belongs to the lipase maturation factor family. As to quaternary structure, interacts with LPL and SEL1L.

It localises to the endoplasmic reticulum membrane. Involved in the maturation of specific proteins in the endoplasmic reticulum. Required for maturation and transport of active lipoprotein lipase (LPL) through the secretory pathway. Each LMF1 molecule chaperones 50 or more molecules of LPL. The polypeptide is Lipase maturation factor 1 (LMF1) (Bos taurus (Bovine)).